Reading from the N-terminus, the 88-residue chain is Large ribosomal subunit protein bL27 (88 aa).

Residues 1–20 (MASKKGVGSTKDGRDSIAKR) form a disordered region.

It belongs to the bacterial ribosomal protein bL27 family.

The chain is Large ribosomal subunit protein bL27 (rpmA) from Geobacillus stearothermophilus (Bacillus stearothermophilus).